We begin with the raw amino-acid sequence, 582 residues long: 2-succinyl-5-enolpyruvyl-6-hydroxy-3-cyclohexene-1-carboxylate synthase (582 aa).

The protein belongs to the TPP enzyme family. MenD subfamily. As to quaternary structure, homodimer. Mg(2+) serves as cofactor. It depends on Mn(2+) as a cofactor. The cofactor is thiamine diphosphate.

It carries out the reaction isochorismate + 2-oxoglutarate + H(+) = 5-enolpyruvoyl-6-hydroxy-2-succinyl-cyclohex-3-ene-1-carboxylate + CO2. Its pathway is quinol/quinone metabolism; 1,4-dihydroxy-2-naphthoate biosynthesis; 1,4-dihydroxy-2-naphthoate from chorismate: step 2/7. It functions in the pathway cofactor biosynthesis; phylloquinone biosynthesis. In terms of biological role, catalyzes the thiamine diphosphate-dependent decarboxylation of 2-oxoglutarate and the subsequent addition of the resulting succinic semialdehyde-thiamine pyrophosphate anion to isochorismate to yield 2-succinyl-5-enolpyruvyl-6-hydroxy-3-cyclohexene-1-carboxylate (SEPHCHC). The sequence is that of 2-succinyl-5-enolpyruvyl-6-hydroxy-3-cyclohexene-1-carboxylate synthase from Prochlorococcus marinus (strain MIT 9303).